A 391-amino-acid chain; its full sequence is MIGTPYTEGARRAMLLGCGELGKEVAIELQRLGVEVIGVDRYPNAPAMQIAHRSHVINMLDAKALRAIIELEKPHLVIPEIEAIATQTLVEMETEGLNVVPTARATQLTMDREGIRRLAAETLGLPTSPYFFCDTETEFNQAIGKIGVPCVVKPVMSSSGKGQSVIRDAAQSTKAWQYAQEGGRAGGGRVIVEGFIPFDYEITLLTISAVNGIHFCAPIGHRQEDGDYRESWQPQAMSADVLAKSQAIASKVVEALGGYGLFGVELFVKGSDVYFSEVSPRPHDTGLVTLISQDLSEFALHVRAILGLPIPNIHQHGPSASAVVLVEGKSKNIRYQGLADALAAENTQLRLFAKPEIDGRRRLGVALARDKDIESAVNKALDSASKVKVIF.

N(1)-(5-phospho-beta-D-ribosyl)glycinamide-binding positions include 20-21 and Glu-80; that span reads EL. ATP-binding positions include Arg-112, Lys-153, 158–163, 193–196, and Glu-201; these read SSGKGQ and EGFI. The region spanning 117-306 is the ATP-grasp domain; the sequence is RLAAETLGLP…EFALHVRAIL (190 aa). Mg(2+) contacts are provided by Glu-265 and Glu-277. Residues Asp-284, Lys-354, and 361-362 each bind N(1)-(5-phospho-beta-D-ribosyl)glycinamide; that span reads RR.

It belongs to the PurK/PurT family. As to quaternary structure, homodimer.

It carries out the reaction N(1)-(5-phospho-beta-D-ribosyl)glycinamide + formate + ATP = N(2)-formyl-N(1)-(5-phospho-beta-D-ribosyl)glycinamide + ADP + phosphate + H(+). It participates in purine metabolism; IMP biosynthesis via de novo pathway; N(2)-formyl-N(1)-(5-phospho-D-ribosyl)glycinamide from N(1)-(5-phospho-D-ribosyl)glycinamide (formate route): step 1/1. Its function is as follows. Involved in the de novo purine biosynthesis. Catalyzes the transfer of formate to 5-phospho-ribosyl-glycinamide (GAR), producing 5-phospho-ribosyl-N-formylglycinamide (FGAR). Formate is provided by PurU via hydrolysis of 10-formyl-tetrahydrofolate. The chain is Formate-dependent phosphoribosylglycinamide formyltransferase from Shewanella sp. (strain ANA-3).